The primary structure comprises 478 residues: MKSQILKLQQTLTKKPASINPLLQQIDGAINEHWSSNFLLKNTVEWAQAQAPKNRSKSPLNNIPFVLKDNIATKGIVTTGGSRFLEDYIPPFSATVFELLNNSGALLVGKANLDEFGLGGTGLHSGFGFVHHPWNETLIPGGSSSGSAYAVARGIVPFSIGTDTGDSVRRPASICNIVGFKPTYGLISRNGVYPYAPSLDHVGIFARYVYDVALVSDEIIKHDKADFSAQKSPDAGKFTRSLKESFNKQIKIGYLKPLEEWFDIELSKKWNSLKERITLEGCELIPFHFPLELLEVIDPVYKLISYSEAVSCYSNLTGIVFGQKLFEPNQASDFSKTITANRDRFFGEQLKRRFIIGAFGTDKNNFTKYFEKAQKIRRVMVDAYLNLFKEADFIVSPSASGFTKTIAAVQKGESFTNLVDDFLQLANFAGNPSITIPWLVKQKDQTIGLSVNANCFHDKQLLQVAAWLEELFQIEHDD.

Residues Lys68 and Ser143 each act as charge relay system in the active site. Catalysis depends on Ser167, which acts as the Acyl-ester intermediate.

This sequence belongs to the amidase family. GatA subfamily. In terms of assembly, heterotrimer of A, B and C subunits.

The catalysed reaction is L-glutamyl-tRNA(Gln) + L-glutamine + ATP + H2O = L-glutaminyl-tRNA(Gln) + L-glutamate + ADP + phosphate + H(+). In terms of biological role, allows the formation of correctly charged Gln-tRNA(Gln) through the transamidation of misacylated Glu-tRNA(Gln) in organisms which lack glutaminyl-tRNA synthetase. The reaction takes place in the presence of glutamine and ATP through an activated gamma-phospho-Glu-tRNA(Gln). The polypeptide is Glutamyl-tRNA(Gln) amidotransferase subunit A (gatA) (Mycoplasma pneumoniae (strain ATCC 29342 / M129 / Subtype 1) (Mycoplasmoides pneumoniae)).